Here is a 205-residue protein sequence, read N- to C-terminus: Recombination protein RecR (205 aa).

The C4-type zinc finger occupies 59 to 74 (CARCNTFCEGGLCDIC). The 96-residue stretch at 82-177 (RRLMVVHMPA…KVSRLSQGIP (96 aa)) folds into the Toprim domain.

Belongs to the RecR family.

In terms of biological role, may play a role in DNA repair. It seems to be involved in an RecBC-independent recombinational process of DNA repair. It may act with RecF and RecO. This is Recombination protein RecR from Neisseria gonorrhoeae (strain ATCC 700825 / FA 1090).